Consider the following 456-residue polypeptide: Glutamate--tRNA ligase 1 (456 aa).

The 'HIGH' region motif lies at 9–19 (PSPTGQIHIGN). The 'KMSKS' region motif lies at 250 to 254 (GLSKR). K253 serves as a coordination point for ATP.

The protein belongs to the class-I aminoacyl-tRNA synthetase family. Glutamate--tRNA ligase type 1 subfamily. In terms of assembly, monomer.

It is found in the cytoplasm. It catalyses the reaction tRNA(Glu) + L-glutamate + ATP = L-glutamyl-tRNA(Glu) + AMP + diphosphate. Its function is as follows. Catalyzes the attachment of glutamate to tRNA(Glu) in a two-step reaction: glutamate is first activated by ATP to form Glu-AMP and then transferred to the acceptor end of tRNA(Glu). The protein is Glutamate--tRNA ligase 1 of Chelativorans sp. (strain BNC1).